Reading from the N-terminus, the 325-residue chain is Protein ORANGE-ORANGE, chloroplastic (325 aa).

Residues 1–54 constitute a chloroplast transit peptide; sequence MDRVLVASYPINHLIRPHSFRIDYCWSTCFTSRLNSGKERQKLSSRWRWRSMAS. Low complexity predominate over residues 53 to 71; the sequence is ASDSTDSSSSSSFAPSVES. Residues 53–77 form a disordered region; that stretch reads ASDSTDSSSSSSFAPSVESDPSDKT. Helical transmembrane passes span 164-184 and 217-237; these read LYYV…GLLA and IVAS…VVEV. Positions 226–317 are CR-type-like; it reads VGVISALMVV…CTGMAMASEH (92 aa). The CXXCXGXG motif repeat unit spans residues 248–255; it reads CKYCLGTG. A CXXCXXXG motif repeat occupies 259 to 266; it reads CARCSNTG. Residues 292–299 form a CXXCXGXG motif repeat; sequence CQNCSGSG. The CXXCXXXG motif repeat unit spans residues 303–310; that stretch reads CPTCLCTG.

Belongs to the orange-like family.

The protein resides in the plastid. Its subcellular location is the chloroplast membrane. In terms of biological role, triggers accumulation of carotenoids, mainly beta-carotene, in fruit flesh. The chain is Protein ORANGE-ORANGE, chloroplastic from Cucumis melo (Muskmelon).